The chain runs to 400 residues: Acetate kinase (400 aa).

Position 10 (N10) interacts with Mg(2+). K17 is an ATP binding site. R91 serves as a coordination point for substrate. D150 acts as the Proton donor/acceptor in catalysis. Residues H210–G214, D285–R287, and G333–N337 each bind ATP. E387 contacts Mg(2+).

The protein belongs to the acetokinase family. Homodimer. Mg(2+) serves as cofactor. Mn(2+) is required as a cofactor.

The protein resides in the cytoplasm. The catalysed reaction is acetate + ATP = acetyl phosphate + ADP. It participates in metabolic intermediate biosynthesis; acetyl-CoA biosynthesis; acetyl-CoA from acetate: step 1/2. Catalyzes the formation of acetyl phosphate from acetate and ATP. Can also catalyze the reverse reaction. The chain is Acetate kinase from Cronobacter sakazakii (strain ATCC BAA-894) (Enterobacter sakazakii).